A 925-amino-acid chain; its full sequence is Aspulvinone E synthetase melA (925 aa).

The tract at residues 11 to 434 is adenylation (A) domain; that stretch reads ETAAARNGDG…GGRAKETIII (424 aa). The region spanning 564 to 644 is the Carrier domain; the sequence is SPKNDFEKGL…ELAAALDNLY (81 aa). O-(pantetheine 4'-phosphoryl)serine is present on S601. A thioesterase (TE) domain region spans residues 663-923; sequence PLWLVHPGAG…KILRSALAER (261 aa).

The protein belongs to the ATP-dependent AMP-binding enzyme family.

Its subcellular location is the cytoplasm. Nonribosomal peptide synthase; part of the gene cluster that mediates the biosynthesis of Asp-melanin, a pigment that confers resistance against UV light and hampers phagocytosis by soil amoeba. The nonribosomal peptide synthase melA converts 4-hydroxyphenylpyruvate (4-HPPA) to aspulvinone E. The tyrosinase tyrP then performs hydroxylations of both aromatic moieties of aspulvinone E. The product of tyrP is highly unstable, and, due to the high reactivity of methides and ortho-diquinones, the polymeric Asp-melanin forms spontaneously. The protein is Aspulvinone E synthetase melA of Aspergillus terreus.